A 480-amino-acid polypeptide reads, in one-letter code: Beta-glucosidase A (480 aa).

Glu-177 functions as the Proton donor in the catalytic mechanism. Glu-378 functions as the Nucleophile in the catalytic mechanism.

This sequence belongs to the glycosyl hydrolase 1 family.

It catalyses the reaction Hydrolysis of terminal, non-reducing beta-D-glucosyl residues with release of beta-D-glucose.. This chain is Beta-glucosidase A (bglA), found in Enterobacter agglomerans (Erwinia herbicola).